A 147-amino-acid polypeptide reads, in one-letter code: D-aminoacyl-tRNA deacylase (147 aa).

Residues 136-137 carry the Gly-cisPro motif, important for rejection of L-amino acids motif; that stretch reads GP.

This sequence belongs to the DTD family. In terms of assembly, homodimer.

The protein localises to the cytoplasm. The catalysed reaction is glycyl-tRNA(Ala) + H2O = tRNA(Ala) + glycine + H(+). It carries out the reaction a D-aminoacyl-tRNA + H2O = a tRNA + a D-alpha-amino acid + H(+). Functionally, an aminoacyl-tRNA editing enzyme that deacylates mischarged D-aminoacyl-tRNAs. Also deacylates mischarged glycyl-tRNA(Ala), protecting cells against glycine mischarging by AlaRS. Acts via tRNA-based rather than protein-based catalysis; rejects L-amino acids rather than detecting D-amino acids in the active site. By recycling D-aminoacyl-tRNA to D-amino acids and free tRNA molecules, this enzyme counteracts the toxicity associated with the formation of D-aminoacyl-tRNA entities in vivo and helps enforce protein L-homochirality. The protein is D-aminoacyl-tRNA deacylase of Streptococcus pneumoniae (strain Taiwan19F-14).